The chain runs to 640 residues: tRNA-dihydrouridine(47) synthase [NAD(P)(+)]-like (640 aa).

The span at 1-11 (MAESEGSNTEN) shows a compositional bias: polar residues. Disordered stretches follow at residues 1 to 23 (MAES…ENLD) and 43 to 123 (FIDA…HSQF). The span at 43 to 57 (FIDADGKDVTEKETC) shows a compositional bias: basic and acidic residues. Polar residues predominate over residues 58–72 (SELSLNDAENTTRTE). Residues 77–86 (PEAKRIKLDD) are compositionally biased toward basic and acidic residues. Residues 104–120 (EKKRARGQNKSRPHMKH) show a composition bias toward basic residues. 2 consecutive C3H1-type zinc fingers follow at residues 123 to 153 (FEEN…HDVA) and 161 to 191 (EDIR…HLGE). Residues 301-303 (PLT) and Gln-355 contribute to the FMN site. Cys-386 acts as the Proton donor in catalysis. FMN-binding positions include Lys-425, His-455, 487 to 489 (NGD), and 510 to 511 (AR).

This sequence belongs to the Dus family. Dus3 subfamily. FMN serves as cofactor.

The enzyme catalyses 5,6-dihydrouridine(47) in tRNA + NAD(+) = uridine(47) in tRNA + NADH + H(+). It carries out the reaction 5,6-dihydrouridine(47) in tRNA + NADP(+) = uridine(47) in tRNA + NADPH + H(+). The catalysed reaction is a 5,6-dihydrouridine in mRNA + NAD(+) = a uridine in mRNA + NADH + H(+). It catalyses the reaction a 5,6-dihydrouridine in mRNA + NADP(+) = a uridine in mRNA + NADPH + H(+). Its function is as follows. Catalyzes the synthesis of dihydrouridine, a modified base, in various RNAs, such as tRNAs, mRNAs and some long non-coding RNAs (lncRNAs). Mainly modifies the uridine in position 47 (U47) in the D-loop of most cytoplasmic tRNAs. Also able to mediate the formation of dihydrouridine in some mRNAs, thereby regulating their translation. This is tRNA-dihydrouridine(47) synthase [NAD(P)(+)]-like (dus3l) from Xenopus laevis (African clawed frog).